A 194-amino-acid chain; its full sequence is Protein PHLOEM PROTEIN 2-LIKE A2 (194 aa).

The helical transmembrane segment at 49–71 threads the bilayer; sequence VTFVFFCFFKISLNSAYLYTLYS.

In terms of tissue distribution, vascular tissues, specifically in phloem companion cell-sieve element complexes.

The protein resides in the membrane. This chain is Protein PHLOEM PROTEIN 2-LIKE A2 (PP2A2), found in Arabidopsis thaliana (Mouse-ear cress).